We begin with the raw amino-acid sequence, 389 residues long: Aspartyl protease UND (389 aa).

The signal sequence occupies residues 1-19 (MKTTMNFVFLFFLPLLINA). The Peptidase A1 domain occupies 58-383 (FMAEIHFGSP…DLSAKTAYIN (326 aa)). Residue Asp76 is part of the active site. Cys86 and Cys92 are oxidised to a cystine. Asn238 carries N-linked (GlcNAc...) asparagine glycosylation. Residue Asp268 is part of the active site. Cys304 and Cys346 are oxidised to a cystine.

This sequence belongs to the peptidase A1 family.

Probable aspartic protease activated by the transcription factor MYB80. May participate in the regulation of the timing of tapetal programmed cell death (PCD) which is critical for pollen development. This chain is Aspartyl protease UND, found in Arabidopsis thaliana (Mouse-ear cress).